Reading from the N-terminus, the 414-residue chain is STAGA complex 65 subunit gamma (414 aa).

Residues N87 to S108 are disordered. S108 bears the Phosphoserine mark. Residue K271 forms a Glycyl lysine isopeptide (Lys-Gly) (interchain with G-Cter in SUMO2) linkage. Phosphoserine occurs at positions 323 and 334. The tract at residues P346–I414 is disordered. A compositionally biased stretch (low complexity) spans S386–S395.

In terms of assembly, component of the STAGA transcription coactivator-HAT complex, at least composed of SUPT3H, SUPT7L, GCN5L2, TAF5L, TAF6L, TADA3L, TAD1L, TAF10, TAF12 and TAF9. Post-translationally, sumoylated. As to expression, expressed at high levels in adenocarcinomas and gliomas and low in esophageal cancers and malignant hematological disease. Also expressed at high level in the thymus, low in peripheral blood mononuclear cells, and lowest in the stomach, small intestine, and skeletal muscle.

It localises to the nucleus. The polypeptide is STAGA complex 65 subunit gamma (SUPT7L) (Homo sapiens (Human)).